We begin with the raw amino-acid sequence, 180 residues long: uncharacterized protein (180 aa).

In terms of domain architecture, Macro spans 1–180 (MVEFEIVKGD…KDYERALRAV (180 aa)).

This is an uncharacterized protein from Thermococcus kodakarensis (strain ATCC BAA-918 / JCM 12380 / KOD1) (Pyrococcus kodakaraensis (strain KOD1)).